We begin with the raw amino-acid sequence, 318 residues long: Protoheme IX farnesyltransferase (318 aa).

Transmembrane regions (helical) follow at residues 27-47 (IMMLVVFTAVAGLAAASGMTG), 52-72 (PAMAAIAVLAVALGSGAAGAI), 103-123 (LTMGLIMSGVSVMLMWLASNW), 124-144 (LAAALLAFSIFYYGVIYTMWL), 152-172 (IVIGGGAGAFPPVIGWAAVTG), 179-199 (WILFAIIFFWTPPHFWALSLL), 225-245 (ILVYTLVLIPVSLAPLATGLG), 248-268 (IYGAVAGGLGLVFLAYAVAIL), and 288-308 (AFLFSILYLFALFGAVLVEHA).

Belongs to the UbiA prenyltransferase family. Protoheme IX farnesyltransferase subfamily. As to quaternary structure, interacts with CtaA.

Its subcellular location is the cell inner membrane. The enzyme catalyses heme b + (2E,6E)-farnesyl diphosphate + H2O = Fe(II)-heme o + diphosphate. The protein operates within porphyrin-containing compound metabolism; heme O biosynthesis; heme O from protoheme: step 1/1. Functionally, converts heme B (protoheme IX) to heme O by substitution of the vinyl group on carbon 2 of heme B porphyrin ring with a hydroxyethyl farnesyl side group. This Hyphomonas neptunium (strain ATCC 15444) protein is Protoheme IX farnesyltransferase.